Consider the following 88-residue polypeptide: UPF0297 protein SGO_2042 (88 aa).

The protein belongs to the UPF0297 family.

This is UPF0297 protein SGO_2042 from Streptococcus gordonii (strain Challis / ATCC 35105 / BCRC 15272 / CH1 / DL1 / V288).